The following is a 1432-amino-acid chain: ABC transporter asL7 (1432 aa).

Positions Met-1–Thr-20 are enriched in polar residues. Residues Met-1–Pro-36 form a disordered region. An ABC transporter 1 domain is found at Leu-91–Ser-341. An N-linked (GlcNAc...) asparagine glycan is attached at Asn-265. 6 helical membrane-spanning segments follow: residues Pro-450 to Phe-470, Val-484 to Leu-504, Val-530 to Phe-550, Gly-559 to Phe-579, Met-597 to Ile-617, and Ile-702 to Tyr-722. The region spanning Phe-786–Ala-1029 is the ABC transporter 2 domain. Gly-822–Thr-829 is a binding site for ATP. The N-linked (GlcNAc...) asparagine glycan is linked to Asn-1017. Residues Leu-1076 to Glu-1095 are disordered. Transmembrane regions (helical) follow at residues Phe-1135 to Ser-1155, Val-1166 to Ile-1186, Ile-1215 to Leu-1235, Leu-1251 to Ile-1271, Ala-1279 to Ile-1299, and Leu-1317 to Ala-1337. A glycan (N-linked (GlcNAc...) asparagine) is linked at Asn-1371. A helical transmembrane segment spans residues Phe-1402 to Val-1422.

It belongs to the ABC transporter superfamily. ABCG family. PDR (TC 3.A.1.205) subfamily.

The protein localises to the cell membrane. Functionally, ABC transporter; part of the gene cluster that mediates the biosynthesis of xenovulene A, an unusual meroterpenoid that has potent inhibitory effects on the human gamma-aminobutyrate A (GABAA) benzodiazepine receptor. This is ABC transporter asL7 from Sarocladium schorii (Acremonium strictum (strain IMI 501407)).